Consider the following 448-residue polypeptide: MSLIASDHFRIVVGLGKSGMSLVRYLARRGLPFAVVDTRENPPELATLRAQYPQVEVRCGELDAEFLCSARELYVSPGLSLRTPALVQAAAKGVRISGDIDLFAREAKAPIVAITGSNAKSTVTTLVGEMAVAADKRVAVGGNLGTPALDLLADDIELYVLELSSFQLETCDRLNAEVATVLNVSEDHMDRYDGMADYHLAKHRIFRGARQVVVNRADALTRPLIADTVPCWSFGLNKPDFKAFGLIEEDGQKWLAFQFDKLLPVGELKIRGAHNYSNALAALALGHAVGLPFDAMLGALKAFSGLAHRCQWVRERQGVSYYDDSKATNVGAALAAIEGLGADIDGKLVLLAGGDGKGADFHDLREPVARFCRAVVLLGRDAGLIAQALGNAVPLVRVATLDEAVRQAAELAREGDAVLLSPACASLDMFKNFEERGRLFAKAVEELA.

Positions 17, 18, 38, 39, and 78 each coordinate UDP-N-acetyl-alpha-D-muramoyl-L-alanine. An ATP-binding site is contributed by 116–122 (GSNAKST). A119, K120, S121, and T122 together coordinate ADP. Residues N143 and H188 each contribute to the UDP-N-acetyl-alpha-D-muramoyl-L-alanine site. Residues N278, R309, D324, and K326 each contribute to the ADP site.

The protein belongs to the MurCDEF family.

Its subcellular location is the cytoplasm. It catalyses the reaction UDP-N-acetyl-alpha-D-muramoyl-L-alanine + D-glutamate + ATP = UDP-N-acetyl-alpha-D-muramoyl-L-alanyl-D-glutamate + ADP + phosphate + H(+). It functions in the pathway cell wall biogenesis; peptidoglycan biosynthesis. Involved in cell wall formation. Catalyzes the addition of D-glutamate to the peptidoglycan precursor UDP-N-acetylmuramoyl-L-alanine (UMA). The polypeptide is UDP-N-acetylmuramoylalanine--D-glutamate ligase (Pseudomonas aeruginosa (strain ATCC 15692 / DSM 22644 / CIP 104116 / JCM 14847 / LMG 12228 / 1C / PRS 101 / PAO1)).